A 729-amino-acid chain; its full sequence is Sodium-dependent neutral amino acid transporter B(0)AT2 (729 aa).

Over 1–69 (MPKNSKVVKR…ERPAWNSKLQ (69 aa)) the chain is Cytoplasmic. A phosphoserine mark is found at Ser25 and Ser55. The next 3 membrane-spanning stretches (helical) occupy residues 70–90 (YILA…FPYL), 98–117 (AYLL…LFFL), and 142–162 (GIGF…NVII). Over 163–225 (GWTLFYFSQS…SSISESGGLN (63 aa)) the chain is Extracellular. A glycan (N-linked (GlcNAc...) asparagine) is linked at Asn187. 4 helical membrane passes run 226-244 (WKMT…LAMI), 253-270 (IMYF…CFLI), 306-323 (VFFA…FSSY), and 335-356 (VLVS…FAVL). Residues 357–452 (GFKANIVNEK…FIAFTEAMTH (96 aa)) lie on the Extracellular side of the membrane. N-linked (GlcNAc...) asparagine glycosylation is found at Asn383 and Asn394. Helical transmembrane passes span 453-472 (FPAS…NLGL), 496-514 (ILTV…MFVQ), 530-550 (TLPL…VYGI), 571-592 (YMWK…IVNM), and 620-642 (VVCF…IRRC). The Cytoplasmic segment spans residues 643–729 (NLIDDSSGNL…DMPDMPESDL (87 aa)). A phosphoserine mark is found at Ser687, Ser699, and Ser701.

This sequence belongs to the sodium:neurotransmitter symporter (SNF) (TC 2.A.22) family. SLC6A15 subfamily. Widely distributed in the central nervous system, including the olfactory bulb, the hypothalamus, the cerebral cortex, the hippocampus, and the cerebellum. In addition, intense expression is found in the motor nuclei including the oculomotor nucleus, abducens nucleus, trigeminal motor nucleus, facial nucleus, hypoglossal nucleus and ventral horn of spinal cord. Intense hybridization signals are also observed in the nuclei containing monoaminergic neurons, such as locus coeruleus, the substantia nigra pars compacta, the ventral tegmental area, the dorsal raphe nucleus and the median raphe nucleus.

It is found in the membrane. The catalysed reaction is L-leucine(in) + Na(+)(in) = L-leucine(out) + Na(+)(out). It catalyses the reaction L-isoleucine(in) + Na(+)(in) = L-isoleucine(out) + Na(+)(out). It carries out the reaction L-methionine(in) + Na(+)(in) = L-methionine(out) + Na(+)(out). The enzyme catalyses L-proline(in) + Na(+)(in) = L-proline(out) + Na(+)(out). The catalysed reaction is L-alanine(in) + Na(+)(in) = L-alanine(out) + Na(+)(out). It catalyses the reaction L-asparagine(in) + Na(+)(in) = L-asparagine(out) + Na(+)(out). It carries out the reaction L-valine(in) + Na(+)(in) = L-valine(out) + Na(+)(out). The enzyme catalyses L-cysteine(in) + Na(+)(in) = L-cysteine(out) + Na(+)(out). The catalysed reaction is L-glutamine(in) + Na(+)(in) = L-glutamine(out) + Na(+)(out). It catalyses the reaction L-serine(in) + Na(+)(in) = L-serine(out) + Na(+)(out). It carries out the reaction L-threonine(in) + Na(+)(in) = L-threonine(out) + Na(+)(out). The enzyme catalyses L-pipecolate(in) + Na(+)(in) = L-pipecolate(out) + Na(+)(out). The catalysed reaction is L-phenylalanine(in) + Na(+)(in) = L-phenylalanine(out) + Na(+)(out). Functions as a sodium-dependent neutral amino acid transporter. Exhibits preference for the branched-chain amino acids, particularly leucine, valine and isoleucine and methionine. Can also transport low-affinity substrates such as alanine, phenylalanine, glutamine and pipecolic acid. Mediates the saturable, pH-sensitive and electrogenic cotransport of proline and sodium ions with a stoichiometry of 1:1. May have a role as transporter for neurotransmitter precursors into neurons. In contrast to other members of the neurotransmitter transporter family, does not appear to be chloride-dependent. This Rattus norvegicus (Rat) protein is Sodium-dependent neutral amino acid transporter B(0)AT2 (Slc6a15).